We begin with the raw amino-acid sequence, 253 residues long: Imidazole glycerol phosphate synthase subunit HisF (253 aa).

Residues D11 and D130 contribute to the active site.

It belongs to the HisA/HisF family. In terms of assembly, heterodimer of HisH and HisF.

It is found in the cytoplasm. The enzyme catalyses 5-[(5-phospho-1-deoxy-D-ribulos-1-ylimino)methylamino]-1-(5-phospho-beta-D-ribosyl)imidazole-4-carboxamide + L-glutamine = D-erythro-1-(imidazol-4-yl)glycerol 3-phosphate + 5-amino-1-(5-phospho-beta-D-ribosyl)imidazole-4-carboxamide + L-glutamate + H(+). The protein operates within amino-acid biosynthesis; L-histidine biosynthesis; L-histidine from 5-phospho-alpha-D-ribose 1-diphosphate: step 5/9. Functionally, IGPS catalyzes the conversion of PRFAR and glutamine to IGP, AICAR and glutamate. The HisF subunit catalyzes the cyclization activity that produces IGP and AICAR from PRFAR using the ammonia provided by the HisH subunit. The polypeptide is Imidazole glycerol phosphate synthase subunit HisF (Caldanaerobacter subterraneus subsp. tengcongensis (strain DSM 15242 / JCM 11007 / NBRC 100824 / MB4) (Thermoanaerobacter tengcongensis)).